Here is a 1203-residue protein sequence, read N- to C-terminus: MTKKSQENISLPQGVLYCWGDKFSGKPTFNPLIPNICFMDNGYNHSLALTETGELYGWGDNRHHQLSSNKAITSIDKPIKIQVIPNQRVKSISCGGNFSAAIMENGLLYVWGTLIEGGKCTESPTKVDLLKGVTCVSIGINHCAVVADSPTTPEKRSVYTWGTNRKGQLGVVGDSITNAPRRVTLGSKAISVCCGEEFTAAIVEGNEVFVWGYNKSRQICSNNSDEIISIPVKPFLGRDIVELSCTKNYIAARSGVGNVCVWGSNEQVCRIGDDKFINFPNKIKQISASTSHILVLSEKGEIFSWGNSEDNQLSHKLDVNSSPNINSSSGTTTPTTNTTTTTKKSTLQFNNVYQLEGRNVLSVYSWGKSSGAIIEPGNFRVDIAESMRRKDNIGSPAPLFFRKLVNYLRGENSKAEGLFRLSGSMARCDDLEKRLDSNEIFPINKYEPYDAADIIKRYLKTLPEPLLTTQLCQKYEKDILNFHNNNINSNSNSSNPNNNNNNNNNNDKIENLILEWIEKLPLENRQLLIYLLSFLQEISYSQIKYQKQNAMGEKNLAIVFAPNILTRGEIGNDEIVEDMIRLLPTIMKQYPLMEDLIIIDQAQQCLRGSRIPYIIDHWIRVTKERETANNSLFKPEIIKTIINSIVECTLEIKNNQNNQNNQKENNNNNNNINNSNNNNTNNTNISPTTLSPSTLSSSQQQQSTPSSLTSSPSPSQRNSLSTGNIANSLSLSSNALFSPNFLSSSKDGNNINNNNNNNNNNNNNNNNNNSSNSSSSSGSSLSSSPNLSPTIVNRSGYSLSFSGGTPSSRDSSVNNLLNTSGGAIQSIQRQFANSGSSSNNNNSNNSPSLIGSNSSPALTFSNSSGNLIETTKLYEKVLALILSPVLPIGSIMKVLPSIFELDTNNDLFIRLLTTIKLVRTVRSNLDEFIQQQLVMIKEINQCSQFIDKAKQLNENVESVITDLLYVDESIKYWKQVQPLIQLYSQQIQSYFKWWFDLLEKSMTETEEKLFRAKKEFDKLETEKTKLEKQLNHLNSVTLETTDEQILLKKQFDQWCLINQIENCSRKIEISNQNLSRVNHDYCSIQSHFEAFKPHLLIVQEFVSIILKSVSLYIEKLDQIKSNTLQMFPQYFNAYIELIFTHHHEIKQQQQLSIIKSLAHSITLQHQLLFIENVNQSKYQISLELETKFNSLKRVILENLKDSR.

RCC1 repeat units follow at residues 52 to 104 (TGEL…AIME), 106 to 148 (GLLY…VVAD), 155 to 204 (KRSV…AIVE), 206 to 255 (NEVF…ARSG), 257 to 298 (GNVC…VLSE), 299 to 359 (KGEI…EGRN), and 361 to 410 (LSVY…YLRG). The interval 316–343 (KLDVNSSPNINSSSGTTTPTTNTTTTTK) is disordered. Residues 320–343 (NSSPNINSSSGTTTPTTNTTTTTK) are compositionally biased toward low complexity. The 214-residue stretch at 381-594 (VDIAESMRRK…TIMKQYPLME (214 aa)) folds into the Rho-GAP domain. Residues 649 to 679 (TLEIKNNQNNQNNQKENNNNNNNINNSNNNN) are a coiled coil. Disordered stretches follow at residues 657-725 (NNQN…TGNI), 746-789 (KDGN…NLSP), and 831-852 (FANS…LIGS). Composition is skewed to low complexity over residues 746–788 (KDGN…PNLS) and 833–852 (NSGS…LIGS). Positions 995-1078 (FDLLEKSMTE…ISNQNLSRVN (84 aa)) form a coiled coil.

It is found in the cytoplasm. Functionally, rho GTPase-activating protein involved in the signal transduction pathway. In Dictyostelium discoideum (Social amoeba), this protein is Rho GTPase-activating protein gacGG (gacGG).